Reading from the N-terminus, the 158-residue chain is Photosystem I assembly protein Ycf3 (158 aa).

3 TPR repeats span residues 35–68 (AFSY…EEDV), 72–105 (SYII…NPRL), and 113–146 (AVIY…APGQ).

This sequence belongs to the Ycf3 family.

It localises to the plastid. It is found in the chloroplast thylakoid membrane. Functionally, essential for the assembly of the photosystem I (PSI) complex. May act as a chaperone-like factor to guide the assembly of the PSI subunits. The chain is Photosystem I assembly protein Ycf3 from Cyanidioschyzon merolae (strain NIES-3377 / 10D) (Unicellular red alga).